The chain runs to 218 residues: Thiopurine S-methyltransferase (218 aa).

Positions 10, 45, 66, and 123 each coordinate S-adenosyl-L-methionine.

Belongs to the class I-like SAM-binding methyltransferase superfamily. TPMT family.

It is found in the cytoplasm. The enzyme catalyses S-adenosyl-L-methionine + a thiopurine = S-adenosyl-L-homocysteine + a thiopurine S-methylether.. In terms of biological role, involved in the biological cycling of tellurium and selenium. Tellurium resistance (Ter) mechanism. The chain is Thiopurine S-methyltransferase from Pseudomonas syringae pv. pisi.